The sequence spans 383 residues: Trichodiene synthase (383 aa).

Belongs to the trichodiene synthase family.

The enzyme catalyses (2E,6E)-farnesyl diphosphate = trichodiene + diphosphate. The protein operates within sesquiterpene biosynthesis; trichothecene biosynthesis. TS is a member of the terpene cyclase group of enzymes. It catalyzes the isomerization and cyclization of farnesyl pyro-phosphate to form trichodiene, the first cyclic intermediate in the biosynthetic pathway for trichothecenes. It serves to branch trichothecene biosynthesis from the isoprenoid pathway. This chain is Trichodiene synthase (TRI5), found in Stachybotrys chartarum (Toxic black mold).